Reading from the N-terminus, the 259-residue chain is MRILVSNDDGVDAAGIRMLASVLREAGHEVTVVAPDRDRSGASNSLTLDLPIRLKRIDHYTVSVAGTPTDCVHLALTGLLEFEPDIVVSGINNAANLGDDVIYSGTVSAAMEGRFLGLPAVAVSLVSRNHDPKHFETAARAAVEIVARLKADPLPADTILNVNVPDLPWNEVKGFEVTRLGNRHRAEGCIAQKDPRGNEVYWIGPAGREQDSGPGTDFHAVRTGHISITPIQVDLTRYQALEKVASWVGGLSAALDQPA.

Asp-8, Asp-9, Ser-40, and Asn-92 together coordinate a divalent metal cation.

The protein belongs to the SurE nucleotidase family. A divalent metal cation serves as cofactor.

It is found in the cytoplasm. The catalysed reaction is a ribonucleoside 5'-phosphate + H2O = a ribonucleoside + phosphate. Its function is as follows. Nucleotidase that shows phosphatase activity on nucleoside 5'-monophosphates. The sequence is that of 5'-nucleotidase SurE from Stenotrophomonas maltophilia (strain R551-3).